Reading from the N-terminus, the 313-residue chain is Ribosomal RNA small subunit methyltransferase H (313 aa).

S-adenosyl-L-methionine is bound by residues 35 to 37 (GGH), aspartate 55, phenylalanine 79, aspartate 101, and glutamine 108.

The protein belongs to the methyltransferase superfamily. RsmH family.

The protein localises to the cytoplasm. It carries out the reaction cytidine(1402) in 16S rRNA + S-adenosyl-L-methionine = N(4)-methylcytidine(1402) in 16S rRNA + S-adenosyl-L-homocysteine + H(+). Functionally, specifically methylates the N4 position of cytidine in position 1402 (C1402) of 16S rRNA. This is Ribosomal RNA small subunit methyltransferase H from Escherichia coli O127:H6 (strain E2348/69 / EPEC).